The chain runs to 638 residues: Threonine--tRNA ligase (638 aa).

A TGS domain is found at 1 to 61 (MPIITLPDGT…DYDAEIKIIT (61 aa)). The segment at 242–533 (DHRKIGKKMD…LIENYAGNFP (292 aa)) is catalytic. Cysteine 333, histidine 384, and histidine 510 together coordinate Zn(2+).

The protein belongs to the class-II aminoacyl-tRNA synthetase family. Homodimer. Requires Zn(2+) as cofactor.

The protein resides in the cytoplasm. The enzyme catalyses tRNA(Thr) + L-threonine + ATP = L-threonyl-tRNA(Thr) + AMP + diphosphate + H(+). In terms of biological role, catalyzes the attachment of threonine to tRNA(Thr) in a two-step reaction: L-threonine is first activated by ATP to form Thr-AMP and then transferred to the acceptor end of tRNA(Thr). Also edits incorrectly charged L-seryl-tRNA(Thr). In Prochlorococcus marinus (strain MIT 9211), this protein is Threonine--tRNA ligase.